Consider the following 270-residue polypeptide: Formamidopyrimidine-DNA glycosylase (270 aa).

The active-site Schiff-base intermediate with DNA is the proline 2. Glutamate 3 (proton donor) is an active-site residue. Lysine 58 (proton donor; for beta-elimination activity) is an active-site residue. Residues histidine 91, arginine 109, and arginine 151 each coordinate DNA. Residues 236–270 (MVYNRQEEPCRLCGTPIRQIRQGQRSTYYCPLCQP) form an FPG-type zinc finger. Arginine 260 functions as the Proton donor; for delta-elimination activity in the catalytic mechanism.

This sequence belongs to the FPG family. Monomer. Zn(2+) serves as cofactor.

The enzyme catalyses Hydrolysis of DNA containing ring-opened 7-methylguanine residues, releasing 2,6-diamino-4-hydroxy-5-(N-methyl)formamidopyrimidine.. It catalyses the reaction 2'-deoxyribonucleotide-(2'-deoxyribose 5'-phosphate)-2'-deoxyribonucleotide-DNA = a 3'-end 2'-deoxyribonucleotide-(2,3-dehydro-2,3-deoxyribose 5'-phosphate)-DNA + a 5'-end 5'-phospho-2'-deoxyribonucleoside-DNA + H(+). Involved in base excision repair of DNA damaged by oxidation or by mutagenic agents. Acts as a DNA glycosylase that recognizes and removes damaged bases. Has a preference for oxidized purines, such as 7,8-dihydro-8-oxoguanine (8-oxoG). Has AP (apurinic/apyrimidinic) lyase activity and introduces nicks in the DNA strand. Cleaves the DNA backbone by beta-delta elimination to generate a single-strand break at the site of the removed base with both 3'- and 5'-phosphates. This is Formamidopyrimidine-DNA glycosylase from Chromobacterium violaceum (strain ATCC 12472 / DSM 30191 / JCM 1249 / CCUG 213 / NBRC 12614 / NCIMB 9131 / NCTC 9757 / MK).